The following is a 230-amino-acid chain: DNA ADP-ribosyl transferase (230 aa).

Positions Trp26–Tyr230 constitute a DarT domain. Residues His30–Thr32, Gly39, Leu47, and Arg67 each bind NAD(+). Arg67 acts as the Proton acceptor in catalysis. Glu183 is a catalytic residue.

Belongs to the DarT ADP-ribosyltransferase family. In terms of assembly, interacts with cognate antitoxin DarG (via C-terminus); this heterodimeric complex neutralizes the toxic effect of DarT by preventing ssDNA binding to DarT and consequently inactivating the toxin by direct protein-protein interactions.

The catalysed reaction is a thymidine in DNA + NAD(+) = an N-(ADP-alpha-D-ribosyl)-thymidine in DNA + nicotinamide + H(+). In terms of biological role, toxic component of the hybrid type II/IV toxin-antitoxin (TA) system DarTG, which plays a crucial role in controlling bacterial growth and bacteriophage infection. ADP-ribosylates ssDNA, preferentially in the motif TTTW. In case of phage infection, DarT toxin ADP-ribosylates DNA, which inhibits both viral DNA and RNA synthesis and leads to abortive infection. Its toxic effect is neutralized by cognate antitoxin DarG. This chain is DNA ADP-ribosyl transferase, found in Mycobacterium bovis (strain BCG / Pasteur 1173P2).